Here is a 255-residue protein sequence, read N- to C-terminus: F-box/SPRY domain-containing protein 1 (255 aa).

Residues 3–51 (DPVAALCNYNVLEVIFSYLELDDLSHCSQVCKSWYHFLNDENSDVWRWH) form the F-box domain. In terms of domain architecture, B30.2/SPRY spans 61 to 253 (LKSDLLSSVS…VSMVYLGTPL (193 aa)).

Belongs to the FBXO45/Fsn family. Component of an E3 ubiquitin ligase complex composed of hiw and Fsn.

It is found in the synapse. It participates in protein modification; protein ubiquitination. Required in the presynaptic motoneuron to down-regulate the levels of wnd and restrain synaptic terminal growth at the neuromuscular junction (NMJ). In Drosophila simulans (Fruit fly), this protein is F-box/SPRY domain-containing protein 1.